Reading from the N-terminus, the 417-residue chain is Serine hydroxymethyltransferase (417 aa).

(6S)-5,6,7,8-tetrahydrofolate contacts are provided by residues Leu119 and Gly123 to Leu125. Position 227 is an N6-(pyridoxal phosphate)lysine (Lys227).

Belongs to the SHMT family. As to quaternary structure, homodimer. Pyridoxal 5'-phosphate serves as cofactor.

It is found in the cytoplasm. The catalysed reaction is (6R)-5,10-methylene-5,6,7,8-tetrahydrofolate + glycine + H2O = (6S)-5,6,7,8-tetrahydrofolate + L-serine. The protein operates within one-carbon metabolism; tetrahydrofolate interconversion. It participates in amino-acid biosynthesis; glycine biosynthesis; glycine from L-serine: step 1/1. Its function is as follows. Catalyzes the reversible interconversion of serine and glycine with tetrahydrofolate (THF) serving as the one-carbon carrier. This reaction serves as the major source of one-carbon groups required for the biosynthesis of purines, thymidylate, methionine, and other important biomolecules. Also exhibits THF-independent aldolase activity toward beta-hydroxyamino acids, producing glycine and aldehydes, via a retro-aldol mechanism. The sequence is that of Serine hydroxymethyltransferase from Buchnera aphidicola subsp. Cinara cedri (strain Cc).